We begin with the raw amino-acid sequence, 283 residues long: Light-independent protochlorophyllide reductase iron-sulfur ATP-binding protein (283 aa).

Residues 15–20 and Lys-44 contribute to the ATP site; that span reads GIGKST. Ser-19 contributes to the Mg(2+) binding site. Residues Cys-100 and Cys-134 each coordinate [4Fe-4S] cluster. 185-186 serves as a coordination point for ATP; it reads NR.

Belongs to the NifH/BchL/ChlL family. Homodimer. Protochlorophyllide reductase is composed of three subunits; ChlL, ChlN and ChlB. It depends on [4Fe-4S] cluster as a cofactor.

It catalyses the reaction chlorophyllide a + oxidized 2[4Fe-4S]-[ferredoxin] + 2 ADP + 2 phosphate = protochlorophyllide a + reduced 2[4Fe-4S]-[ferredoxin] + 2 ATP + 2 H2O. The protein operates within porphyrin-containing compound metabolism; chlorophyll biosynthesis (light-independent). In terms of biological role, component of the dark-operative protochlorophyllide reductase (DPOR) that uses Mg-ATP and reduced ferredoxin to reduce ring D of protochlorophyllide (Pchlide) to form chlorophyllide a (Chlide). This reaction is light-independent. The L component serves as a unique electron donor to the NB-component of the complex, and binds Mg-ATP. This Synechococcus sp. (strain JA-2-3B'a(2-13)) (Cyanobacteria bacterium Yellowstone B-Prime) protein is Light-independent protochlorophyllide reductase iron-sulfur ATP-binding protein.